A 332-amino-acid chain; its full sequence is Putative potassium channel regulatory protein sup-10 (332 aa).

An N-terminal signal peptide occupies residues Met-1–Cys-18. Residues Trp-19–Ala-301 lie on the Extracellular side of the membrane. Asn-61, Asn-107, and Asn-166 each carry an N-linked (GlcNAc...) asparagine glycan. A helical membrane pass occupies residues Phe-302–Trp-322. The Cytoplasmic portion of the chain corresponds to Gly-323–Asp-332.

May form a complex with sup-9 and unc-93 where sup-10 and unc-93 act as regulatory subunits of the two pore potassium channel sup-9. Sup-10 may regulate sup-9 via sup-18. Low levels in body-wall muscles, eight vulval muscles, intestinal muscles and anal depressor muscle.

Its subcellular location is the membrane. Its function is as follows. May contribute to coordination of muscle contraction as regulatory subunit of a nonessential potassium channel complex. The protein is Putative potassium channel regulatory protein sup-10 of Caenorhabditis elegans.